The sequence spans 309 residues: tRNA pseudouridine synthase B (309 aa).

Asp39 functions as the Nucleophile in the catalytic mechanism.

It belongs to the pseudouridine synthase TruB family. Type 1 subfamily.

The enzyme catalyses uridine(55) in tRNA = pseudouridine(55) in tRNA. Responsible for synthesis of pseudouridine from uracil-55 in the psi GC loop of transfer RNAs. The polypeptide is tRNA pseudouridine synthase B (Bacillus velezensis (strain DSM 23117 / BGSC 10A6 / LMG 26770 / FZB42) (Bacillus amyloliquefaciens subsp. plantarum)).